The primary structure comprises 1202 residues: Nucleolar protein 6 (1202 aa).

Residues 1–64 (MNKTKRKQQS…KKYKDNETNK (64 aa)) are disordered.

Belongs to the NRAP family. As to quaternary structure, part of the small subunit (SSU) processome, composed of more than 70 proteins and the RNA chaperone small nucleolar RNA (snoRNA) U3.

It is found in the nucleus. It localises to the nucleolus. Its subcellular location is the chromosome. Part of the small subunit (SSU) processome, first precursor of the small eukaryotic ribosomal subunit. During the assembly of the SSU processome in the nucleolus, many ribosome biogenesis factors, an RNA chaperone and ribosomal proteins associate with the nascent pre-rRNA and work in concert to generate RNA folding, modifications, rearrangements and cleavage as well as targeted degradation of pre-ribosomal RNA by the RNA exosome. The chain is Nucleolar protein 6 from Drosophila willistoni (Fruit fly).